A 159-amino-acid polypeptide reads, in one-letter code: Testis-specific XK-related protein, Y-linked (159 aa).

The next 3 helical transmembrane spans lie at 1–21 (MFIFNSIADDIFPLISCVGAI), 45–65 (IYLMIWHSLVIISPVVTLAFF), and 72–92 (GSLHFLLIIYFVLLLTPWLEF).

This sequence belongs to the XK family. In terms of tissue distribution, testis specific.

It localises to the membrane. The protein is Testis-specific XK-related protein, Y-linked (XKRY) of Homo sapiens (Human).